A 647-amino-acid chain; its full sequence is Threonine--tRNA ligase (647 aa).

The 61-residue stretch at 1–61 folds into the TGS domain; the sequence is MINITFPDGA…TEDGSIEIVT (61 aa). The catalytic stretch occupies residues 242-540; that stretch reads DHRKLGKELD…LIENYKGAFP (299 aa). Residues Cys-336, His-387, and His-517 each contribute to the Zn(2+) site.

This sequence belongs to the class-II aminoacyl-tRNA synthetase family. As to quaternary structure, homodimer. Zn(2+) is required as a cofactor.

It localises to the cytoplasm. The enzyme catalyses tRNA(Thr) + L-threonine + ATP = L-threonyl-tRNA(Thr) + AMP + diphosphate + H(+). Functionally, catalyzes the attachment of threonine to tRNA(Thr) in a two-step reaction: L-threonine is first activated by ATP to form Thr-AMP and then transferred to the acceptor end of tRNA(Thr). Also edits incorrectly charged L-seryl-tRNA(Thr). In Streptococcus pneumoniae serotype 19F (strain G54), this protein is Threonine--tRNA ligase.